An 83-amino-acid polypeptide reads, in one-letter code: Kappa-ctenitoxin-Pn1a (83 aa).

The signal sequence occupies residues 1–21 (MWFKIQVLVLAITLITLGIQA). Residues 22 to 37 (EPNSSPNNPLIVEEDR) constitute a propeptide that is removed on maturation. Intrachain disulfides connect Cys-40–Cys-55, Cys-47–Cys-60, Cys-54–Cys-71, and Cys-62–Cys-69. The propeptide occupies 78–83 (LFGFGK).

It belongs to the neurotoxin 02 (plectoxin) family. Expressed by the venom gland.

The protein resides in the secreted. Functionally, antagonist of L-type calcium channels (Cav1/CACNA1). In GH3 neuroendocrinal cell line, it reversibly inhibits the A-type potassium current but does not block other potassium currents or calcium channels. Shows an important acetylcholine-mediated antiarrhythmogenic effect in isolated hearts. In vivo, causes paralysis in the posterior limbs and gradual decreases in movement and aggression during 24 hours at dose levels of 5 ug per mouse. This chain is Kappa-ctenitoxin-Pn1a, found in Phoneutria nigriventer (Brazilian armed spider).